A 93-amino-acid polypeptide reads, in one-letter code: Putative sodium channel toxin Ts41 (93 aa).

The N-terminal stretch at 1–23 (MKIGVLFTIISMLCLLEVRKICS) is a signal peptide. 4 cysteine pairs are disulfide-bonded: cysteine 22/cysteine 87, cysteine 39/cysteine 62, cysteine 48/cysteine 67, and cysteine 52/cysteine 69. The LCN-type CS-alpha/beta domain occupies 26–88 (EGGYPRYFSF…FWNVYRKYCK (63 aa)).

It belongs to the long (4 C-C) scorpion toxin superfamily. In terms of tissue distribution, expressed by the venom gland.

It is found in the secreted. The edited BmKBTx-like may modulate voltage-gated sodium channels (Nav). Functionally, the non-edited form is able to form a heterodimer. In orthologs, a heterodimer with LVP beta-chain induces lipolysis in rat adipocytes, which is mediated through the beta-2 adrenergic receptor pathway (ADRB2). Since no LVP beta-chains have been identified in the venom of this scorpion, it is possible that this protein is not involved in a lipolysis process. The chain is Putative sodium channel toxin Ts41 from Tityus serrulatus (Brazilian scorpion).